The following is a 254-amino-acid chain: Type III pantothenate kinase (254 aa).

Residue Asp-6–Lys-13 coordinates ATP. Substrate is bound by residues Tyr-99 and Gly-106–Arg-109. The active-site Proton acceptor is Asp-108. A K(+)-binding site is contributed by Asp-128. Thr-131 contacts ATP. Position 182 (Thr-182) interacts with substrate.

The protein belongs to the type III pantothenate kinase family. Homodimer. It depends on NH4(+) as a cofactor. Requires K(+) as cofactor.

Its subcellular location is the cytoplasm. The catalysed reaction is (R)-pantothenate + ATP = (R)-4'-phosphopantothenate + ADP + H(+). It functions in the pathway cofactor biosynthesis; coenzyme A biosynthesis; CoA from (R)-pantothenate: step 1/5. In terms of biological role, catalyzes the phosphorylation of pantothenate (Pan), the first step in CoA biosynthesis. The chain is Type III pantothenate kinase from Halorhodospira halophila (strain DSM 244 / SL1) (Ectothiorhodospira halophila (strain DSM 244 / SL1)).